We begin with the raw amino-acid sequence, 538 residues long: Adenine deaminase (538 aa).

The protein belongs to the metallo-dependent hydrolases superfamily. Adenine deaminase family. The cofactor is Mn(2+).

The catalysed reaction is adenine + H2O + H(+) = hypoxanthine + NH4(+). This is Adenine deaminase from Methanothermobacter thermautotrophicus (strain ATCC 29096 / DSM 1053 / JCM 10044 / NBRC 100330 / Delta H) (Methanobacterium thermoautotrophicum).